The chain runs to 463 residues: RuvB-like 2 (463 aa).

Gly77–Thr84 contributes to the ATP binding site.

Belongs to the RuvB family. Forms homohexameric rings. Can form a dodecamer with ruvbl1 made of two stacked hexameric rings. Component of the chromatin-remodeling Ino80 complex. Component of some MLL1/MLL complex.

It is found in the nucleus. It localises to the dynein axonemal particle. It carries out the reaction ATP + H2O = ADP + phosphate + H(+). Functionally, has double-stranded DNA-stimulated ATPase activity. Has ATP-dependent DNA helicase (5' to 3') activity suggesting a role in nuclear processes such as recombination and transcription. Represses gene activation mediated by beta-catenin. Proposed core component of the chromatin remodeling Ino80 complex which exhibits DNA- and nucleosome-activated ATPase activity and catalyzes ATP-dependent nucleosome sliding. Involved in the endoplasmic reticulum (ER)-associated degradation (ERAD) pathway where it negatively regulates expression of ER stress response genes. May act as a regulator of embryonic heart growth. This is RuvB-like 2 (ruvbl2) from Danio rerio (Zebrafish).